We begin with the raw amino-acid sequence, 45 residues long: Large ribosomal subunit protein bL34 (45 aa).

Residues 1–45 (MTKRTFGGTSRKRKRVSGFRVRMRSHTGRRVIKSRRQKGRERIAV) form a disordered region. The segment covering 10 to 39 (SRKRKRVSGFRVRMRSHTGRRVIKSRRQKG) has biased composition (basic residues).

It belongs to the bacterial ribosomal protein bL34 family.

The polypeptide is Large ribosomal subunit protein bL34 (Prochlorococcus marinus (strain MIT 9301)).